Here is a 95-residue protein sequence, read N- to C-terminus: Transcription and mRNA export factor ENY2-2 (95 aa).

The protein belongs to the ENY2 family. In terms of assembly, component of the nuclear pore complex (NPC)-associated TREX-2 complex (transcription and export complex 2). Component of the SAGA transcription coactivator-HAT complex. Within the SAGA complex, participates in a subcomplex of SAGA called the DUB module (deubiquitination module).

It localises to the nucleus. Its subcellular location is the nucleoplasm. Functionally, involved in mRNA export coupled transcription activation by association with both the TREX-2 and the SAGA complexes. The transcription regulatory histone acetylation (HAT) complex SAGA is a multiprotein complex that activates transcription by remodeling chromatin and mediating histone acetylation and deubiquitination. Within the SAGA complex, participates in a subcomplex that specifically deubiquitinates histones. The SAGA complex is recruited to specific gene promoters by activators, where it is required for transcription. The TREX-2 complex functions in docking export-competent ribonucleoprotein particles (mRNPs) to the nuclear entrance of the nuclear pore complex (nuclear basket). TREX-2 participates in mRNA export and accurate chromatin positioning in the nucleus by tethering genes to the nuclear periphery. This is Transcription and mRNA export factor ENY2-2 (eny2-2) from Salmo salar (Atlantic salmon).